Here is a 258-residue protein sequence, read N- to C-terminus: Maintenance of carboxysome distribution protein A (258 aa).

ATP is bound by residues G11, G12, Q13, G14, K15, T16, T17, Q40, E147, K151, F182, R183, L216, E217, S218, and Y221. Residue T16 coordinates Mg(2+).

It belongs to the ParA family. McdA subfamily. Homodimerizes in the presence of ATP, making extra nucleotide contacts than with ADP or AMP-PNP. Each subunit binds 1 ATP molecule; Glu-147, Lys-151 and Arg-183 cross the dimer interface to contact ATP in the other subunit, while Phe-182, Arg-183 and Tyr-221 stack with the adenine base in their own subunit. Forms a complex with McdB.

The protein resides in the cytoplasm. It is found in the nucleoid. It catalyses the reaction ATP + H2O = ADP + phosphate + H(+). Its function is as follows. McdA and McdB together mediate carboxysome (Cb) spacing, size, ultrastructure and probably inheritance in the cell, together they prevent Cb aggregation. McdA is an ATPase that forms dynamic gradients on the nucleoid in response to adapter protein McdB, which associates with carboxysomes. The interplay between McdA gradients on the nucleoid and McdB-bound carboxysomes result in the equal spacing of Cbs along the cell length. Binds DNA saturably and strongly in the presence of Mg(2+)ATP; without ATP, DNA-binding is very poor (tested with a mutant that should not be able to hydrolyze ATP, Asp-38-Ala). Decreasing the NaCl concentration increases DNA binding. Incorrect positioning (aggregation) of carboxysomes results in reduced CO(2) fixation by encapsulated ribulose-1,5-bisphosphate carboxylase (RuBisCO, cbbL/cbbS), which leads to slower growth. This chain is Maintenance of carboxysome distribution protein A, found in Gloeothece citriformis (strain PCC 7424) (Cyanothece sp. (strain PCC 7424)).